The following is a 574-amino-acid chain: Septation ring formation regulator EzrA (574 aa).

At 1-7 (MSSGIIL) the chain is on the extracellular side. A helical membrane pass occupies residues 8–26 (LIVAIVLLVIIAYLVGVII). The Cytoplasmic segment spans residues 27–574 (RKRNDTLITS…YEKTRERIRF (548 aa)). 4 coiled-coil regions span residues 102–131 (NFIR…REAL), 161–190 (ENED…FVAL), 276–379 (VTLD…QQEK), and 459–493 (QLEA…NLEE).

It belongs to the EzrA family.

The protein localises to the cell membrane. Functionally, negative regulator of FtsZ ring formation; modulates the frequency and position of FtsZ ring formation. Inhibits FtsZ ring formation at polar sites. Interacts either with FtsZ or with one of its binding partners to promote depolymerization. The chain is Septation ring formation regulator EzrA from Streptococcus equi subsp. zooepidemicus (strain H70).